A 367-amino-acid polypeptide reads, in one-letter code: Ribosomal RNA large subunit methyltransferase M (367 aa).

S-adenosyl-L-methionine-binding positions include S188, 221–224, D240, D260, and D277; that span reads CPGG. The Proton acceptor role is filled by K306.

This sequence belongs to the class I-like SAM-binding methyltransferase superfamily. RNA methyltransferase RlmE family. RlmM subfamily. As to quaternary structure, monomer.

It localises to the cytoplasm. It carries out the reaction cytidine(2498) in 23S rRNA + S-adenosyl-L-methionine = 2'-O-methylcytidine(2498) in 23S rRNA + S-adenosyl-L-homocysteine + H(+). Its function is as follows. Catalyzes the 2'-O-methylation at nucleotide C2498 in 23S rRNA. This is Ribosomal RNA large subunit methyltransferase M from Serratia proteamaculans (strain 568).